Reading from the N-terminus, the 678-residue chain is Methionine--tRNA ligase (678 aa).

The short motif at 18–28 (PYANGPIHLGH) is the 'HIGH' region element. Zn(2+) contacts are provided by cysteine 149, cysteine 152, cysteine 162, and cysteine 165. The short motif at 334–338 (KMSKS) is the 'KMSKS' region element. Lysine 337 is a binding site for ATP. The 102-residue stretch at 577–678 (DFAKVDLRVA…SGATPGMRVM (102 aa)) folds into the tRNA-binding domain.

It belongs to the class-I aminoacyl-tRNA synthetase family. MetG type 1 subfamily. In terms of assembly, homodimer. It depends on Zn(2+) as a cofactor.

It is found in the cytoplasm. It carries out the reaction tRNA(Met) + L-methionine + ATP = L-methionyl-tRNA(Met) + AMP + diphosphate. In terms of biological role, is required not only for elongation of protein synthesis but also for the initiation of all mRNA translation through initiator tRNA(fMet) aminoacylation. This chain is Methionine--tRNA ligase, found in Marinobacter nauticus (strain ATCC 700491 / DSM 11845 / VT8) (Marinobacter aquaeolei).